A 136-amino-acid polypeptide reads, in one-letter code: Large ribosomal subunit protein uL16 (136 aa).

Belongs to the universal ribosomal protein uL16 family. In terms of assembly, part of the 50S ribosomal subunit.

Its function is as follows. Binds 23S rRNA and is also seen to make contacts with the A and possibly P site tRNAs. The polypeptide is Large ribosomal subunit protein uL16 (Proteus mirabilis (strain HI4320)).